Consider the following 352-residue polypeptide: 4-hydroxy-3-methylbut-2-en-1-yl diphosphate synthase (flavodoxin) (352 aa).

4 residues coordinate [4Fe-4S] cluster: Cys263, Cys266, Cys298, and Glu305.

Belongs to the IspG family. It depends on [4Fe-4S] cluster as a cofactor.

The enzyme catalyses (2E)-4-hydroxy-3-methylbut-2-enyl diphosphate + oxidized [flavodoxin] + H2O + 2 H(+) = 2-C-methyl-D-erythritol 2,4-cyclic diphosphate + reduced [flavodoxin]. It participates in isoprenoid biosynthesis; isopentenyl diphosphate biosynthesis via DXP pathway; isopentenyl diphosphate from 1-deoxy-D-xylulose 5-phosphate: step 5/6. Its function is as follows. Converts 2C-methyl-D-erythritol 2,4-cyclodiphosphate (ME-2,4cPP) into 1-hydroxy-2-methyl-2-(E)-butenyl 4-diphosphate. In Sulfurimonas denitrificans (strain ATCC 33889 / DSM 1251) (Thiomicrospira denitrificans (strain ATCC 33889 / DSM 1251)), this protein is 4-hydroxy-3-methylbut-2-en-1-yl diphosphate synthase (flavodoxin).